A 394-amino-acid polypeptide reads, in one-letter code: Bifunctional enzyme Fae/Hps (394 aa).

The tract at residues 1 to 162 (MEFRIGEALI…YEKDRSFHPF (162 aa)) is formaldehyde-activating enzyme. H18 serves as the catalytic Proton donor. 5 residues coordinate substrate: D20, L49, K67, T69, and Q84. The interval 163-394 (VGRKLTKLWD…TDQFRIMTDF (232 aa)) is 3-hexulose-6-phosphate synthase.

This sequence in the N-terminal section; belongs to the formaldehyde-activating enzyme family. The protein in the C-terminal section; belongs to the HPS/KGPDC family. HPS subfamily.

It carries out the reaction 5,6,7,8-tetrahydromethanopterin + formaldehyde = 5,10-methylenetetrahydromethanopterin + H2O. It catalyses the reaction D-ribulose 5-phosphate + formaldehyde = D-arabino-hex-3-ulose 6-phosphate. The protein operates within carbohydrate biosynthesis; D-ribose 5-phosphate biosynthesis. Functionally, catalyzes the condensation of formaldehyde with tetrahydromethanopterin (H(4)MPT) to 5,10-methylenetetrahydromethanopterin. Catalyzes the reversible formation of ribulose-5-phosphate and formaldehyde from 3-hexulose-6-phosphate. This Archaeoglobus fulgidus (strain ATCC 49558 / DSM 4304 / JCM 9628 / NBRC 100126 / VC-16) protein is Bifunctional enzyme Fae/Hps.